The following is a 134-amino-acid chain: Replication enhancer protein (134 aa).

This sequence belongs to the geminiviridae replication enhancer protein family. In terms of assembly, homooligomer. Interacts with the replication-associated protein (REP). Interacts with host proliferating cell nuclear antigen (PCNA). Interacts with host retinoblastoma-related protein 1 (RBR1), and may thereby deregulate the host cell cycle. Oligomerization and interaction with PCNA are necessary for optimal replication enhancement.

Its function is as follows. Increases viral DNA accumulation. Enhances infectivity and symptom expression. In Mungbean yellow mosaic virus (strain Vigna) (MYMV), this protein is Replication enhancer protein.